The chain runs to 309 residues: Ornithine carbamoyltransferase (309 aa).

Residues serine 51–threonine 54, glutamine 78, arginine 102, and histidine 129–glutamine 132 contribute to the carbamoyl phosphate site. Residues asparagine 161, aspartate 225, and serine 229 to methionine 230 each bind L-ornithine. Carbamoyl phosphate-binding positions include cysteine 265 to leucine 266 and arginine 293.

It belongs to the aspartate/ornithine carbamoyltransferase superfamily. OTCase family.

It localises to the cytoplasm. The enzyme catalyses carbamoyl phosphate + L-ornithine = L-citrulline + phosphate + H(+). Its pathway is amino-acid biosynthesis; L-arginine biosynthesis; L-arginine from L-ornithine and carbamoyl phosphate: step 1/3. Functionally, reversibly catalyzes the transfer of the carbamoyl group from carbamoyl phosphate (CP) to the N(epsilon) atom of ornithine (ORN) to produce L-citrulline. This Mycolicibacterium paratuberculosis (strain ATCC BAA-968 / K-10) (Mycobacterium paratuberculosis) protein is Ornithine carbamoyltransferase.